A 341-amino-acid polypeptide reads, in one-letter code: Methionine import ATP-binding protein MetN 1 (341 aa).

Residues 2 to 241 form the ABC transporter domain; sequence IKLNQIVKRY…PQHEVTKRFV (240 aa). 38 to 45 lines the ATP pocket; that stretch reads GFSGAGKS.

This sequence belongs to the ABC transporter superfamily. Methionine importer (TC 3.A.1.24) family. As to quaternary structure, the complex is composed of two ATP-binding proteins (MetN), two transmembrane proteins (MetI) and a solute-binding protein (MetQ).

It localises to the cell membrane. It carries out the reaction L-methionine(out) + ATP + H2O = L-methionine(in) + ADP + phosphate + H(+). The enzyme catalyses D-methionine(out) + ATP + H2O = D-methionine(in) + ADP + phosphate + H(+). Its function is as follows. Part of the ABC transporter complex MetNIQ involved in methionine import. Responsible for energy coupling to the transport system. This is Methionine import ATP-binding protein MetN 1 from Staphylococcus epidermidis (strain ATCC 12228 / FDA PCI 1200).